Reading from the N-terminus, the 945-residue chain is Alanine--tRNA ligase (945 aa).

4 residues coordinate Zn(2+): His-564, His-568, Cys-666, and His-670. The interval 911–945 (SGGGRPDMAQAGGKDASKLPEALQQARETMTEKLG) is disordered.

This sequence belongs to the class-II aminoacyl-tRNA synthetase family. Zn(2+) serves as cofactor.

Its subcellular location is the cytoplasm. The catalysed reaction is tRNA(Ala) + L-alanine + ATP = L-alanyl-tRNA(Ala) + AMP + diphosphate. Catalyzes the attachment of alanine to tRNA(Ala) in a two-step reaction: alanine is first activated by ATP to form Ala-AMP and then transferred to the acceptor end of tRNA(Ala). Also edits incorrectly charged Ser-tRNA(Ala) and Gly-tRNA(Ala) via its editing domain. The chain is Alanine--tRNA ligase from Rhodopirellula baltica (strain DSM 10527 / NCIMB 13988 / SH1).